We begin with the raw amino-acid sequence, 364 residues long: Alanine racemase (364 aa).

The Proton acceptor; specific for D-alanine role is filled by Lys-35. The residue at position 35 (Lys-35) is an N6-(pyridoxal phosphate)lysine. A substrate-binding site is contributed by Arg-132. Tyr-260 (proton acceptor; specific for L-alanine) is an active-site residue. Met-308 is a binding site for substrate.

Belongs to the alanine racemase family. It depends on pyridoxal 5'-phosphate as a cofactor.

It catalyses the reaction L-alanine = D-alanine. Its pathway is amino-acid biosynthesis; D-alanine biosynthesis; D-alanine from L-alanine: step 1/1. Its function is as follows. Catalyzes the interconversion of L-alanine and D-alanine. May also act on other amino acids. The chain is Alanine racemase (alr) from Acidithiobacillus ferrooxidans (strain ATCC 23270 / DSM 14882 / CIP 104768 / NCIMB 8455) (Ferrobacillus ferrooxidans (strain ATCC 23270)).